A 194-amino-acid polypeptide reads, in one-letter code: MGMYKYIREAWKSPKKSYVGELLKKRMIKWRREPVVVRIERPTRLDRARSLGYQAKQGYVVVRVRVRRGGRKRPRWKGGRKPSKMGMVKYSPKKSLQWIAEEKAARKFPNLEVLNSYWVGEDGMYKWFEVIMVDPHHPVIKSDPKIAWITGKAHKGRVFRGLTSAGKKGRGLRNKGKGAEKVRPSVRANKGKTK.

The disordered stretch occupies residues 164 to 194; sequence SAGKKGRGLRNKGKGAEKVRPSVRANKGKTK. Residues 167–176 show a composition bias toward basic residues; that stretch reads KKGRGLRNKG.

Belongs to the eukaryotic ribosomal protein eL15 family.

This chain is Large ribosomal subunit protein eL15, found in Thermococcus gammatolerans (strain DSM 15229 / JCM 11827 / EJ3).